Here is a 507-residue protein sequence, read N- to C-terminus: Probable aldehyde dehydrogenase (507 aa).

219 to 225 (GFGVEAG) provides a ligand contact to NAD(+). Residues glutamate 263 and cysteine 302 contribute to the active site.

This sequence belongs to the aldehyde dehydrogenase family.

The enzyme catalyses an aldehyde + NAD(+) + H2O = a carboxylate + NADH + 2 H(+). This is Probable aldehyde dehydrogenase from Streptomyces coelicolor (strain ATCC BAA-471 / A3(2) / M145).